A 555-amino-acid polypeptide reads, in one-letter code: Zinc transporter ZIP5 (555 aa).

The Extracellular segment spans residues 1 to 242 (MGGQTVWMTL…HSQASKTSEG (242 aa)). The tract at residues 108-148 (KHPSQSISHSHSHEDHHPSQGTTNSPPLRESLDAKSALSGS) is disordered. A helical membrane pass occupies residues 243–263 (FLIALGWASLALLVISLPSLV). The Cytoplasmic portion of the chain corresponds to 264–314 (ALGMAPLLQPSVLQVFLCPMAGMAVGTLCGDALLHLMPHAIFSQHTDHQNA). A helical transmembrane segment spans residues 315–335 (VFKGLSVLGGLYLLFIFESLL). Topologically, residues 336-408 (GLKQHFKNLK…DGIHNLTDGL (73 aa)) are extracellular. Polar residues predominate over residues 363 to 374 (TSSANQNESSGH). The disordered stretch occupies residues 363-383 (TSSANQNESSGHGHSHGQAEP). Residues 409–429 (AIGVAFSQSLTGGFSTAIAVF) form a helical membrane-spanning segment. The Cytoplasmic portion of the chain corresponds to 430–452 (CHELPHELGDLAVLLSAGWPVRR). Residues 453 to 473 (LLVFSGLSALLGFVGVLAGSA) form a helical membrane-spanning segment. The Extracellular portion of the chain corresponds to 474–482 (LGNHWASHS). A helical transmembrane segment spans residues 483–503 (PWILTLTAGVFLYVALADMMP). Over 504 to 518 (EMLHGACGSVSPLKR) the chain is Cytoplasmic. Residues 519–539 (FLLQALGLLTGGAIMLCIALF) traverse the membrane as a helical segment. Residues 540–555 (EDHIAVSLGENSLGEN) lie on the Extracellular side of the membrane.

The protein belongs to the ZIP transporter (TC 2.A.5) family.

It is found in the basolateral cell membrane. It catalyses the reaction Zn(2+)(in) = Zn(2+)(out). Functionally, uniporter that transports zinc(2+) into polarized cells of enterocytes, pancreatic acinar and endoderm cells across the basolateral membrane and participates, notably, in zinc excretion from the intestine by the uptake of zinc from the blood into the intestine. The transport mechanism is temperature- and concentration-dependent and saturable. Mediates zinc homeostasis that is essential for venous angiogenesis. This Danio rerio (Zebrafish) protein is Zinc transporter ZIP5 (slc39a5).